The chain runs to 83 residues: Short neurotoxin VAN-29 (83 aa).

Residues 1 to 21 form the signal peptide; the sequence is MKTLLLTLVVVTIVCLDLGYT. 4 disulfides stabilise this stretch: cysteine 24-cysteine 45, cysteine 38-cysteine 62, cysteine 64-cysteine 75, and cysteine 76-cysteine 81.

The protein belongs to the three-finger toxin family. Short-chain subfamily. Type I alpha-neurotoxin sub-subfamily. In terms of tissue distribution, expressed by the venom gland.

It localises to the secreted. Binds to muscle nicotinic acetylcholine receptor (nAChR) and inhibit acetylcholine from binding to the receptor, thereby impairing neuromuscular transmission. In Laticauda laticaudata (Blue-ringed sea krait), this protein is Short neurotoxin VAN-29.